A 216-amino-acid chain; its full sequence is Probable nicotinate-nucleotide adenylyltransferase (216 aa).

Belongs to the NadD family.

It carries out the reaction nicotinate beta-D-ribonucleotide + ATP + H(+) = deamido-NAD(+) + diphosphate. It participates in cofactor biosynthesis; NAD(+) biosynthesis; deamido-NAD(+) from nicotinate D-ribonucleotide: step 1/1. Its function is as follows. Catalyzes the reversible adenylation of nicotinate mononucleotide (NaMN) to nicotinic acid adenine dinucleotide (NaAD). In Marinobacter nauticus (strain ATCC 700491 / DSM 11845 / VT8) (Marinobacter aquaeolei), this protein is Probable nicotinate-nucleotide adenylyltransferase.